A 228-amino-acid polypeptide reads, in one-letter code: Somatolactin (228 aa).

A signal peptide spans 1-24 (MFSIRMNKVLQGFVCLMLTHRIVG). 3 cysteine pairs are disulfide-bonded: cysteine 29–cysteine 38, cysteine 88–cysteine 200, and cysteine 217–cysteine 225. N-linked (GlcNAc...) asparagine glycans are attached at residues asparagine 141 and asparagine 177.

The protein belongs to the somatotropin/prolactin family.

It localises to the secreted. This Anguilla anguilla (European freshwater eel) protein is Somatolactin.